Consider the following 948-residue polypeptide: ATPase 8, plasma membrane-type (948 aa).

The Cytoplasmic portion of the chain corresponds to 1–64 (MATEFSWDEI…EKSENKFLKF (64 aa)). Residues 65–84 (LGFMWNPLSWVMESAAIMAI) traverse the membrane as a helical segment. Residues 85 to 96 (VLANGGGKAPDW) are Extracellular-facing. Residues 97 to 117 (QDFIGIMVLLIINSTISFIEE) form a helical membrane-spanning segment. The Cytoplasmic portion of the chain corresponds to 118–246 (NNAGNAAAAL…GHFQKVLTSI (129 aa)). Residues 247-267 (GNFCICSIGLGMLIEILIMYP) form a helical membrane-spanning segment. The Extracellular segment spans residues 268–276 (IQHRTYRDG). A helical transmembrane segment spans residues 277-294 (IDNLLVLLIGGIPIAMPT). Topologically, residues 295–646 (VLSVTMAIGS…TSRAIFQRMK (352 aa)) are cytoplasmic. Aspartate 332 serves as the catalytic 4-aspartylphosphate intermediate. Residues aspartate 591 and aspartate 595 each coordinate Mg(2+). The chain crosses the membrane as a helical span at residues 647–668 (NYTIYAVSITIRIVLGFMLVAL). At 669–673 (IWRFD) the chain is on the extracellular side. The chain crosses the membrane as a helical span at residues 674 to 696 (FAPFMVLIIAILNDGTIMTISKD). Over 697–712 (RVKPSPVPDSWKLNEI) the chain is Cytoplasmic. Residues 713-733 (FATGVVLGTYMALTTVLFFWL) traverse the membrane as a helical segment. The Extracellular portion of the chain corresponds to 734 to 754 (AHDTDFFSKTFGVRSIQGNEE). The helical transmembrane segment at 755–775 (ELMAALYLQVSIISQALIFVT) threads the bilayer. The Cytoplasmic portion of the chain corresponds to 776–787 (RSRSWSFVERPG). Residues 788–808 (FLLLIAFVIAQLVATLIAVYA) form a helical membrane-spanning segment. Residues 809–816 (NWGFARIV) are Extracellular-facing. The chain crosses the membrane as a helical span at residues 817–837 (GCGWGWAGGIWVYSIITYIPL). The Cytoplasmic segment spans residues 838 to 948 (DILKFIIRYA…IDTIQQHYTV (111 aa)). Residue threonine 884 is modified to Phosphothreonine. At serine 930 the chain carries Phosphoserine. An interaction with 14-3-3 proteins region spans residues 946-948 (YTV). Threonine 947 is subject to Phosphothreonine.

It belongs to the cation transport ATPase (P-type) (TC 3.A.3) family. Type IIIA subfamily. As to quaternary structure, binds to 14-3-3 proteins. The binding is induced by phosphorylation of Thr-947. Binding to 14-3-3 proteins activates the H(+)-ATPase. As to expression, expressed in guard cells, roots and leaves, and barely in mesophyll cells.

The protein resides in the membrane. The catalysed reaction is ATP + H2O + H(+)(in) = ADP + phosphate + 2 H(+)(out). In terms of biological role, the plasma membrane H(+) ATPase of plants and fungi generates a proton gradient that drives the active transport of nutrients by H(+)-symport. The resulting external acidification and/or internal alkinization may mediate growth responses. The protein is ATPase 8, plasma membrane-type (AHA8) of Arabidopsis thaliana (Mouse-ear cress).